A 516-amino-acid chain; its full sequence is Maturase K (516 aa).

Belongs to the intron maturase 2 family. MatK subfamily.

It is found in the plastid. It localises to the chloroplast. Its function is as follows. Usually encoded in the trnK tRNA gene intron. Probably assists in splicing its own and other chloroplast group II introns. The protein is Maturase K of Chara connivens (Convergent stonewort).